Here is a 197-residue protein sequence, read N- to C-terminus: Peptidyl-tRNA hydrolase (197 aa).

TRNA is bound at residue Tyr21. His26 acts as the Proton acceptor in catalysis. Residues Tyr72, Asn74, and Asn120 each coordinate tRNA.

The protein belongs to the PTH family. In terms of assembly, monomer.

It localises to the cytoplasm. It catalyses the reaction an N-acyl-L-alpha-aminoacyl-tRNA + H2O = an N-acyl-L-amino acid + a tRNA + H(+). Hydrolyzes ribosome-free peptidyl-tRNAs (with 1 or more amino acids incorporated), which drop off the ribosome during protein synthesis, or as a result of ribosome stalling. Its function is as follows. Catalyzes the release of premature peptidyl moieties from peptidyl-tRNA molecules trapped in stalled 50S ribosomal subunits, and thus maintains levels of free tRNAs and 50S ribosomes. In Alkalilimnicola ehrlichii (strain ATCC BAA-1101 / DSM 17681 / MLHE-1), this protein is Peptidyl-tRNA hydrolase.